Here is a 485-residue protein sequence, read N- to C-terminus: Envelope glycoprotein C (485 aa).

Positions 1 to 32 are cleaved as a signal peptide; it reads MGLVNIMRFITFAYIICGGFILTRTSGTSASA. Positions 28–72 are enriched in low complexity; that stretch reads TSASASPATPTTNTGEGTSSPVTPTYTTSTDSNNSTATNNSTDVN. A disordered region spans residues 28-88; sequence TSASASPATP…TPSHPHSHEN (61 aa). Over 33-444 the chain is Virion surface; that stretch reads SPATPTTNTG…DASPIVEDMP (412 aa). N-linked (GlcNAc...) asparagine; by host glycosylation is found at asparagine 60, asparagine 61, asparagine 66, asparagine 67, asparagine 72, asparagine 108, asparagine 116, asparagine 147, asparagine 220, asparagine 225, and asparagine 286. A disulfide bridge connects residues cysteine 92 and cysteine 109. Residues 237–330 form the Ig-like domain; it reads PLMDLSVHPS…EWYRDEVSFS (94 aa). Cystine bridges form between cysteine 256/cysteine 318, cysteine 357/cysteine 416, and cysteine 361/cysteine 390. The chain crosses the membrane as a helical span at residues 445-468; it reads VLTGIIAVTCGAAALALVVLITAV. The Cytoplasmic segment spans residues 469–485; sequence CFYCSKPSQVPYKKADF.

The protein belongs to the herpesviridae glycoprotein C family. Interacts with host complement component C3; this interaction inhibits host immune response by disregulating complement cascade.

It localises to the virion membrane. Its function is as follows. Essential for the initial attachment to heparan sulfate moieties of the host cell surface proteoglycans. Also plays a role in host immune evasion by inhibiting the host complement cascade activation. This Equine herpesvirus 4 (strain 1942) (EHV-4) protein is Envelope glycoprotein C (gC).